We begin with the raw amino-acid sequence, 293 residues long: Ribosomal protein L11 methyltransferase (293 aa).

Residues Thr-145, Gly-166, Asp-188, and Asn-230 each coordinate S-adenosyl-L-methionine.

The protein belongs to the methyltransferase superfamily. PrmA family.

It is found in the cytoplasm. It catalyses the reaction L-lysyl-[protein] + 3 S-adenosyl-L-methionine = N(6),N(6),N(6)-trimethyl-L-lysyl-[protein] + 3 S-adenosyl-L-homocysteine + 3 H(+). Its function is as follows. Methylates ribosomal protein L11. The sequence is that of Ribosomal protein L11 methyltransferase from Salmonella agona (strain SL483).